We begin with the raw amino-acid sequence, 577 residues long: MNPVNATALYISASRLVLNYDPGDPKAFTEINRLLPYFRQSLSCCVCGHLLQDPIAPTNSTCQHYVCKTCKGKKMMMKPSCSWCKDYEQFEENKQLSILVNCYKKLCEYITQTTLARDIIEAVDCSSDILALLNDGSLFCEETEKPSDSSFTLCLTHSPLPSTSEPTADPQASLSPMSESTLSIAIGSSVINGLPTYNGLSIDRFGINIPSPEHPNTIDVCNTVDIKTEDLSDNLPPVCDTVATDLCSTGIDICSFSEDIKPGDSLLLSVEEVLRSLETVSNTEVCCPNLQPNLEATVSNGPFLQLSSQSLSHNVFMSTSPALHGLSCTAATPKVAKLNRKRSRSESDSEKVQPLPISTIIRGPTLGASAPVTVKRESKISLQPIATVPNGGTTPKISKTVLLSTKSMKKSHEHGSKKSHSKSKPGILKKDKAVKEKMPSHHFMPGSPTKTVYKKPQEKKGCKCGRATQNPSVLTCRGQRCPCYSNRKACLDCICRGCQNSYMANGEKKLEAFAVPEKALEQTRLTLGINVTSIAVRNASTSTSVINVTGSPVTTFLAASTHDDKSLDEAIDMRFDC.

Positions 1 to 116 (MNPVNATALY…CEYITQTTLA (116 aa)) are sufficient for interaction with MSL1. 8 residues coordinate Zn(2+): cysteine 44, cysteine 47, cysteine 62, histidine 64, cysteine 67, cysteine 70, cysteine 81, and cysteine 84. The RING-type zinc-finger motif lies at 44–85 (CCVCGHLLQDPIAPTNSTCQHYVCKTCKGKKMMMKPSCSWCK). A Glycyl lysine isopeptide (Lys-Gly) (interchain with G-Cter in SUMO2) cross-link involves residue lysine 375. The interval 405 to 428 (TKSMKKSHEHGSKKSHSKSKPGIL) is disordered. Residues 407–423 (SMKKSHEHGSKKSHSKS) are compositionally biased toward basic residues. Serine 447 carries the post-translational modification Phosphoserine. A CXC MSL2-type domain is found at 457–508 (QEKKGCKCGRATQNPSVLTCRGQRCPCYSNRKACLDCICRGCQNSYMANGEK). Residues cysteine 462, cysteine 464, cysteine 476, cysteine 481, cysteine 483, cysteine 490, cysteine 493, cysteine 495, and cysteine 498 each contribute to the Zn(2+) site.

The protein belongs to the MSL2 family. Component of a multisubunit histone acetyltransferase complex (MSL) at least composed of the KAT8/MOF/MYST1, MSL1/hampin, MSL2 and MSL3. Forms a MSL heterotetrameric core with MSL1.

The protein localises to the nucleus. The protein resides in the chromosome. It carries out the reaction S-ubiquitinyl-[E2 ubiquitin-conjugating enzyme]-L-cysteine + [acceptor protein]-L-lysine = [E2 ubiquitin-conjugating enzyme]-L-cysteine + N(6)-ubiquitinyl-[acceptor protein]-L-lysine.. It participates in protein modification; protein ubiquitination. Its function is as follows. Non-catalytic component of the MSL histone acetyltransferase complex, a multiprotein complex that mediates the majority of histone H4 acetylation at 'Lys-16' (H4K16ac), an epigenetic mark that prevents chromatin compaction. The MSL complex is required for chromosome stability and genome integrity by maintaining homeostatic levels of H4K16ac. The MSL complex is also involved in gene dosage by promoting up-regulation of genes expressed by the X chromosome. X up-regulation is required to compensate for autosomal biallelic expression. The MSL complex also participates in gene dosage compensation by promoting expression of Tsix non-coding RNA. MSL2 plays a key role in gene dosage by ensuring biallelic expression of a subset of dosage-sensitive genes, including many haploinsufficient genes. Acts by promoting promoter-enhancer contacts, thereby preventing DNA methylation of one allele and creating a methylation-free environment for methylation-sensitive transcription factors such as SP1, KANSL1 and KANSL3. Also acts as an E3 ubiquitin ligase that promotes monoubiquitination of histone H2B at 'Lys-35' (H2BK34Ub), but not that of H2A. This activity is greatly enhanced by heterodimerization with MSL1. H2B ubiquitination in turn stimulates histone H3 methylation at 'Lys-4' (H3K4me) and 'Lys-79' (H3K79me) and leads to gene activation, including that of HOXA9 and MEIS1. The sequence is that of E3 ubiquitin-protein ligase MSL2 from Mus musculus (Mouse).